A 622-amino-acid polypeptide reads, in one-letter code: Dehydrogenase xptC (622 aa).

Residues 1-18 form the signal peptide; it reads MAKLSVILLFRSLLLCGA. Residues 47 to 48, 68 to 69, and 123 to 126 contribute to the FAD site; these read VS, EA, and NAMI. Asn160, Asn173, Asn357, Asn364, and Asn480 each carry an N-linked (GlcNAc...) asparagine glycan. FAD is bound at residue 598–599; that stretch reads PM.

The protein belongs to the GMC oxidoreductase family. In terms of assembly, homodimer. Requires FAD as cofactor.

The protein operates within secondary metabolite biosynthesis. Functionally, dehydrogenase involved in the conversion of monodictyphenone to the prenyl xanthones such as emericellin, shamixanthone and epishamixanthone. Monodictyphenone is first converted to variecoxanthone A via a paeciloxanthone intermediate by the consecutive actions of the FAD-dependent monooxygenase mdpD and the xanthone prenyltransferase xptB. XptB catalyzes regular O-prenylation at the hydroxy group of C-7 of the xanthone ring. Variecoxanthone A is further prenylated to emericellin by xptA before being reduced to shamixanthone and epishamixanthone by the dehydrogenase xptC. This is Dehydrogenase xptC from Emericella nidulans (strain FGSC A4 / ATCC 38163 / CBS 112.46 / NRRL 194 / M139) (Aspergillus nidulans).